Here is a 267-residue protein sequence, read N- to C-terminus: DNA damage-regulated autophagy modulator protein 2 (267 aa).

6 consecutive transmembrane segments (helical) span residues leucine 8–isoleucine 28, arginine 53–valine 73, leucine 87–serine 107, phenylalanine 118–valine 138, leucine 160–leucine 180, and valine 203–phenylalanine 223.

Belongs to the DRAM/TMEM150 family. Expressed in the retina.

The protein resides in the lysosome membrane. The protein localises to the photoreceptor inner segment. It is found in the apical cell membrane. In terms of biological role, plays a role in the initiation of autophagy. In the retina, might be involved in the process of photoreceptor cells renewal and recycling to preserve visual function. Induces apoptotic cell death when coexpressed with DRAM1. This Mus musculus (Mouse) protein is DNA damage-regulated autophagy modulator protein 2 (Dram2).